The sequence spans 306 residues: S-methyl-5'-thioadenosine phosphorylase (306 aa).

Phosphate contacts are provided by residues T21, 63–64 (RH), and 96–97 (SA). Residue M198 coordinates substrate. S199 is a phosphate binding site. 222–224 (DYD) serves as a coordination point for substrate.

This sequence belongs to the PNP/MTAP phosphorylase family. MTAP subfamily. Homotrimer.

The protein resides in the cytoplasm. It is found in the nucleus. It carries out the reaction S-methyl-5'-thioadenosine + phosphate = 5-(methylsulfanyl)-alpha-D-ribose 1-phosphate + adenine. It participates in amino-acid biosynthesis; L-methionine biosynthesis via salvage pathway; S-methyl-5-thio-alpha-D-ribose 1-phosphate from S-methyl-5'-thioadenosine (phosphorylase route): step 1/1. Catalyzes the reversible phosphorylation of S-methyl-5'-thioadenosine (MTA) to adenine and 5-methylthioribose-1-phosphate. Involved in the breakdown of MTA, a major by-product of polyamine biosynthesis. Responsible for the first step in the methionine salvage pathway after MTA has been generated from S-adenosylmethionine. Has broad substrate specificity with 6-aminopurine nucleosides as preferred substrates. This chain is S-methyl-5'-thioadenosine phosphorylase, found in Sclerotinia sclerotiorum (strain ATCC 18683 / 1980 / Ss-1) (White mold).